The following is a 213-amino-acid chain: High frequency lysogenization protein HflD homolog (213 aa).

Positions 79 to 126 (QGLNAELTRYTLSLMVLERKLSSAKGALDTLGNRINGLQRQLEHFDLQ) form a coiled coil.

The protein belongs to the HflD family.

Its subcellular location is the cytoplasm. The protein localises to the cell inner membrane. The sequence is that of High frequency lysogenization protein HflD homolog from Shigella boydii serotype 18 (strain CDC 3083-94 / BS512).